The chain runs to 200 residues: MRIYYIGVFRSGGEKALELSEVKDLSQFGFFERSSVGQFMTFFAETVASRTGAGQRQSIEEGNYIGHVYARSEGICGVLITDKEYPVRPAYTLLNKILDEYLVAHPKEEWADVTETNDALKMKQLDTYISKYQDPSQADAIMKVQQELDETKIVLHKTIENVLQRGEKLDNLVDKSESLTASSKMFYKQAKKSNSCCIIM.

A Longin domain is found at 7-129 (GVFRSGGEKA…LKMKQLDTYI (123 aa)). Residues 140-200 (AIMKVQQELD…KKSNSCCIIM (61 aa)) enclose the v-SNARE coiled-coil homology domain. A Phosphothreonine modification is found at threonine 158. Residue cysteine 196 is the site of S-palmitoyl cysteine attachment. Cysteine methyl ester is present on cysteine 197. Cysteine 197 carries S-farnesyl cysteine lipidation. Residues 198-200 (IIM) constitute a propeptide, removed in mature form.

Belongs to the synaptobrevin family.

Its subcellular location is the cell membrane. The polypeptide is Synaptobrevin homolog YKT6 (YKT6) (Saccharomyces cerevisiae (strain ATCC 204508 / S288c) (Baker's yeast)).